The chain runs to 507 residues: Subtilisin-like protease 1 (507 aa).

The signal sequence occupies residues 1–19; the sequence is MGVFRFISISLAAVSAANA. Residues 20–116 constitute a propeptide that is removed on maturation; sequence AQILSMPHAQ…VEPDTIISVN (97 aa). In terms of domain architecture, Inhibitor I9 spans 34-113; the sequence is SYIVMMKDDT…VMFVEPDTII (80 aa). Positions 126–400 constitute a Peptidase S8 domain; that stretch reads SWGLARISNS…NVLISNGGAK (275 aa). Active-site charge relay system residues include Asp-158 and His-190. A disordered region spans residues 175–198; sequence GSNQVNDGDDRDGSGHGTHTSGTM. The N-linked (GlcNAc...) asparagine glycan is linked to Asn-251. Residues 282–294 show a composition bias toward polar residues; sequence NENQDARSSSPAS. The tract at residues 282–312 is disordered; that stretch reads NENQDARSSSPASEPSVCTVGSSAEDDSRSS. Ser-345 (charge relay system) is an active-site residue. Positions 378 to 394 are enriched in polar residues; that stretch reads SSSITDVGPGTPTNVLI. A disordered region spans residues 378–486; that stretch reads SSSITDVGPG…YPGGDNFDFD (109 aa). Composition is skewed to pro residues over residues 405–428 and 438–449; these read KPAPGPSPNPSQPSEPQQPAPSQP and EPFPGEPFPGEP. A compositionally biased stretch (low complexity) spans 450–461; that stretch reads FPGESSPGESAP. Positions 462 to 476 are enriched in pro residues; that stretch reads APAPMPPSPQHPHTP.

The protein belongs to the peptidase S8 family.

It is found in the secreted. In terms of biological role, secreted subtilisin-like serine protease with keratinolytic activity that contributes to pathogenicity. This chain is Subtilisin-like protease 1 (SUB1), found in Trichophyton equinum (Horse ringworm fungus).